Here is a 241-residue protein sequence, read N- to C-terminus: Chloride intracellular channel protein 1 (241 aa).

The residue at position 2 (A2) is an N-acetylalanine. The segment at 2–90 (AEEQPQVELF…EEFLEAVLCP (89 aa)) is required for insertion into the membrane. Position 13 is an N6-acetyllysine (K13). C24 lines the glutathione pocket. C24 carries the post-translational modification S-glutathionyl cysteine; alternate. Residues 24–27 (CPFS) carry the G-site motif. Residues C24 and C59 are joined by a disulfide bond. A helical transmembrane segment spans residues 26 to 46 (FSQRLFMVLWLKGVTFNVTTV). The glutathione site is built by L64 and T77. Residues 93 to 233 (YPKLAALNPE…PDDEEIELAY (141 aa)) form the GST C-terminal domain. K119 carries the post-translational modification N6-acetyllysine. S121 carries the phosphoserine modification. Residue K131 is modified to N6-acetyllysine. A phosphoserine mark is found at S156 and S211. Y233 carries the post-translational modification Phosphotyrosine.

Belongs to the chloride channel CLIC family. In terms of assembly, monomer. Homodimer (in vitro). Interacts with TRAPPC2. Dimerization requires a conformation change that leads to the exposure of a large hydrophobic surface. In vivo, this may lead to membrane insertion. Interacts with AKAP9. Hydrogen peroxide treatment causes a conformation change, leading to dimerization and formation of an intramolecular disulfide bond between Cys-24 and Cys-59. Expression is prominent in heart, placenta, liver, kidney and pancreas.

It localises to the nucleus. The protein localises to the nucleus membrane. It is found in the cytoplasm. The protein resides in the cell membrane. Its subcellular location is the endoplasmic reticulum. It catalyses the reaction L-dehydroascorbate + 2 glutathione = glutathione disulfide + L-ascorbate. It carries out the reaction chloride(in) = chloride(out). The catalysed reaction is iodide(out) = iodide(in). The enzyme catalyses thiocyanate(in) = thiocyanate(out). It catalyses the reaction nitrate(in) = nitrate(out). It carries out the reaction bromide(in) = bromide(out). The catalysed reaction is fluoride(in) = fluoride(out). The oxidoreductase activity is inhibited by rapamycin, amphotericin B and IAA-94. The channel conductance is regulated by pH and redox membrane potential. Inhibited by IAA-94. Its function is as follows. In the soluble state, catalyzes glutaredoxin-like thiol disulfide exchange reactions with reduced glutathione as electron donor. Reduces selenite and dehydroascorbate and may act as an antioxidant during oxidative stress response. Can insert into membranes and form voltage-dependent multi-ion conductive channels. Membrane insertion seems to be redox-regulated and may occur only under oxidizing conditions. Involved in regulation of the cell cycle. This is Chloride intracellular channel protein 1 from Homo sapiens (Human).